A 153-amino-acid polypeptide reads, in one-letter code: Bud site selection protein 25 (153 aa).

Involved in bud site selection. Required for resistance to the DNA-damaging agent methyl methanesulfonate (MMS). The sequence is that of Bud site selection protein 25 from Saccharomyces cerevisiae (strain ATCC 204508 / S288c) (Baker's yeast).